Consider the following 567-residue polypeptide: Proline--tRNA ligase (567 aa).

Belongs to the class-II aminoacyl-tRNA synthetase family. ProS type 1 subfamily. In terms of assembly, homodimer.

Its subcellular location is the cytoplasm. It catalyses the reaction tRNA(Pro) + L-proline + ATP = L-prolyl-tRNA(Pro) + AMP + diphosphate. Catalyzes the attachment of proline to tRNA(Pro) in a two-step reaction: proline is first activated by ATP to form Pro-AMP and then transferred to the acceptor end of tRNA(Pro). As ProRS can inadvertently accommodate and process non-cognate amino acids such as alanine and cysteine, to avoid such errors it has two additional distinct editing activities against alanine. One activity is designated as 'pretransfer' editing and involves the tRNA(Pro)-independent hydrolysis of activated Ala-AMP. The other activity is designated 'posttransfer' editing and involves deacylation of mischarged Ala-tRNA(Pro). The misacylated Cys-tRNA(Pro) is not edited by ProRS. The sequence is that of Proline--tRNA ligase from Geobacillus thermodenitrificans (strain NG80-2).